We begin with the raw amino-acid sequence, 281 residues long: Secretory carrier-associated membrane protein 5 (281 aa).

The segment at 1-49 (MHHDPNPFDEGADDNPFSNGGGGGARRGGGGGGGGGGGGGKSQFSFGFG) is disordered. Topologically, residues 1–139 (MHHDPNPFDE…AQKLQYLAFA (139 aa)) are cytoplasmic. The segment covering 19 to 49 (NGGGGGARRGGGGGGGGGGGGGKSQFSFGFG) has biased composition (gly residues). Residues 76–102 (KELLQWEADLKRREADIRRREEALKSA) are a coiled coil. The next 4 membrane-spanning stretches (helical) occupy residues 140–160 (SWLGIVLCLFWNFIAVIVCWI), 167–187 (LFFLATIYGMLGMPLSYLMWY), 202–222 (FGWFFLCYMLHIAFCVFAAIA), and 250–270 (IFYFVGFALFCLETLVSIWVL). Residues 271–281 (QKVYMYFRGHK) lie on the Cytoplasmic side of the membrane.

Belongs to the SCAMP family.

The protein localises to the cell membrane. The protein resides in the cytoplasmic vesicle. Its subcellular location is the secretory vesicle membrane. Functionally, probably involved in membrane trafficking. The sequence is that of Secretory carrier-associated membrane protein 5 (SCAMP5) from Oryza sativa subsp. japonica (Rice).